A 680-amino-acid polypeptide reads, in one-letter code: Protein FAR1-RELATED SEQUENCE 11 (680 aa).

The disordered stretch occupies residues 1–36 (MSDDPGQMLLIYDDPSDQRSLSLDDASSTEESPDDN). The FAR1 domain maps to 62–156 (EFYSTFAKRC…ANHHNHELLE (95 aa)). The MULE domain maps to 277–373 (AVVFDTTHRL…CIWMVVGKFP (97 aa)). The SWIM-type zinc-finger motif lies at 556–589 (YWVPQEGIISCSCQLFEFSGFLCRHALRVLSTGN).

Belongs to the FHY3/FAR1 family. As to expression, expressed in hypocotyls, rosette and cauline leaves, inflorescences stems, flowers and siliques.

The protein localises to the nucleus. Its function is as follows. Putative transcription activator involved in regulating light control of development. This Arabidopsis thaliana (Mouse-ear cress) protein is Protein FAR1-RELATED SEQUENCE 11 (FRS11).